Reading from the N-terminus, the 293-residue chain is Ribosomal protein L11 methyltransferase (293 aa).

Residues Thr145, Gly166, Asp188, and Asn230 each contribute to the S-adenosyl-L-methionine site.

This sequence belongs to the methyltransferase superfamily. PrmA family.

The protein resides in the cytoplasm. It carries out the reaction L-lysyl-[protein] + 3 S-adenosyl-L-methionine = N(6),N(6),N(6)-trimethyl-L-lysyl-[protein] + 3 S-adenosyl-L-homocysteine + 3 H(+). In terms of biological role, methylates ribosomal protein L11. This is Ribosomal protein L11 methyltransferase from Salmonella newport (strain SL254).